The chain runs to 534 residues: Sodium-dependent lysophosphatidylcholine symporter 1 (534 aa).

Residues 1–39 (MAKGEGAESGSAAGLLPTSILQASERPVQVKKEPKKKQQ) are Cytoplasmic-facing. A helical transmembrane segment spans residues 40-69 (LSICNKLCYAVGGAPYQLTGCALGFFLQIY). Topologically, residues 70 to 80 (LLDVAKVEPLP) are extracellular. A helical membrane pass occupies residues 81–101 (ASIILFVGRAWDAFTDPLVGF). Over 102-113 (CISKSSWTRLGR) the chain is Cytoplasmic. The helical transmembrane segment at 114–133 (LMPWIIFSTPLAIIAYFLIW) threads the bilayer. Residues 134–148 (FVPDFPSGTESSHGF) are Extracellular-facing. The chain crosses the membrane as a helical span at residues 149-173 (LWYLLFYCLFETLVTCFHVPYSALT). At 174-180 (MFISTEQ) the chain is on the cytoplasmic side. The chain crosses the membrane as a helical span at residues 181-212 (SERDSATAYRMTVEVLGTVIGTAIQGQIVGQA). The Extracellular portion of the chain corresponds to 213 to 232 (KAPCLQDQNGSVVVSEVANR). A disulfide bridge links cysteine 216 with cysteine 464. 2 N-linked (GlcNAc...) asparagine glycosylation sites follow: asparagine 221 and asparagine 231. A helical membrane pass occupies residues 233-266 (TQSTASLKDTQNAYLLAAGIIASIYVLCAFILIL). At 267–297 (GVREQRELYESQQAESMPFFQGLRLVMGHGP) the chain is on the cytoplasmic side. The chain crosses the membrane as a helical span at residues 298–324 (YVKLIAGFLFTSLAFMLVEGNFALFCT). Residues 325–335 (YTLDFRNEFQN) lie on the Extracellular side of the membrane. A helical transmembrane segment spans residues 336-354 (LLLAIMLSATFTIPIWQWF). Topologically, residues 355–358 (LTRF) are cytoplasmic. The chain crosses the membrane as a helical span at residues 359–380 (GKKTAVYIGISSAVPFLILVAL). At 381 to 383 (MER) the chain is on the extracellular side. A helical membrane pass occupies residues 384–420 (NLIVTYVVAVAAGVSVAAAFLLPWSMLPDVIDDFHLK). At 421 to 430 (HPHSPGTEPI) the chain is on the cytoplasmic side. Residues 431–457 (FFSFYVFFTKFASGVSLGVSTLSLDFA) form a helical membrane-spanning segment. At 458 to 469 (NYQRQGCSQPEQ) the chain is on the extracellular side. The helical transmembrane segment at 470 to 493 (VKFTLKMLVTMAPIILILLGLLLF) threads the bilayer. The Cytoplasmic portion of the chain corresponds to 494–534 (KLYPIDEEKRRQNKKALQALREEASSSGCSDTDSTELASIL).

It belongs to the major facilitator superfamily. N-glycosylated. In terms of tissue distribution, widely expressed. Exhibits an oscillatory pattern of expression in brown adipose tissue and liver consistent with a circadian rhythm. Enriched in brain micro-vessels, where it is specifically present in endothelium constituting the blood-brain barrier (at protein level).

The protein localises to the cell membrane. It localises to the endoplasmic reticulum membrane. It catalyses the reaction a 1-acyl-sn-glycero-3-phosphocholine(in) + Na(+)(in) = a 1-acyl-sn-glycero-3-phosphocholine(out) + Na(+)(out). The catalysed reaction is 1-(4Z,7Z,10Z,13Z,16Z,19Z-docosahexaenoyl)-sn-glycero-3-phosphocholine(in) + Na(+)(in) = 1-(4Z,7Z,10Z,13Z,16Z,19Z-docosahexaenoyl)-sn-glycero-3-phosphocholine(out) + Na(+)(out). The enzyme catalyses 1-(9Z-octadecenoyl)-sn-glycero-3-phosphocholine(in) + Na(+)(in) = 1-(9Z-octadecenoyl)-sn-glycero-3-phosphocholine(out) + Na(+)(out). It carries out the reaction 1-hexadecanoyl-sn-glycero-3-phosphocholine(in) + Na(+)(in) = 1-hexadecanoyl-sn-glycero-3-phosphocholine(out) + Na(+)(out). It catalyses the reaction a 1-acyl-sn-glycero-3-phosphoethanolamine(in) + Na(+)(in) = a 1-acyl-sn-glycero-3-phosphoethanolamine(out) + Na(+)(out). Functionally, sodium-dependent lysophosphatidylcholine (LPC) symporter, which plays an essential role for blood-brain barrier formation and function. Specifically expressed in endothelium of the blood-brain barrier of micro-vessels and transports LPC into the brain. Transport of LPC is essential because it constitutes the major mechanism by which docosahexaenoic acid (DHA), an omega-3 fatty acid that is essential for normal brain growth and cognitive function, enters the brain. Transports LPC carrying long-chain fatty acids such LPC oleate and LPC palmitate with a minimum acyl chain length of 14 carbons. Does not transport docosahexaenoic acid in unesterified fatty acid. Not required for central nervous system vascular morphogenesis. This Mus musculus (Mouse) protein is Sodium-dependent lysophosphatidylcholine symporter 1.